A 1408-amino-acid polypeptide reads, in one-letter code: DNA-directed RNA polymerase subunit beta (1408 aa).

The disordered stretch occupies residues Pro-1383–Ala-1408. A compositionally biased stretch (basic and acidic residues) spans Gly-1399–Ala-1408.

It belongs to the RNA polymerase beta chain family. In terms of assembly, the RNAP catalytic core consists of 2 alpha, 1 beta, 1 beta' and 1 omega subunit. When a sigma factor is associated with the core the holoenzyme is formed, which can initiate transcription.

It catalyses the reaction RNA(n) + a ribonucleoside 5'-triphosphate = RNA(n+1) + diphosphate. Its function is as follows. DNA-dependent RNA polymerase catalyzes the transcription of DNA into RNA using the four ribonucleoside triphosphates as substrates. This is DNA-directed RNA polymerase subunit beta from Myxococcus xanthus (strain DK1622).